The sequence spans 590 residues: Aspartate--tRNA(Asp/Asn) ligase (590 aa).

Residue Glu178 participates in L-aspartate binding. The aspartate stretch occupies residues 202–205; the sequence is QIYK. Position 224 (Arg224) interacts with L-aspartate. ATP is bound by residues 224 to 226 and Gln233; that span reads RDE. Position 453 (His453) interacts with L-aspartate. Glu487 contacts ATP. Residue Arg494 coordinates L-aspartate. 539 to 542 is a binding site for ATP; the sequence is GLDR.

Belongs to the class-II aminoacyl-tRNA synthetase family. Type 1 subfamily. In terms of assembly, homodimer.

The protein localises to the cytoplasm. The enzyme catalyses tRNA(Asx) + L-aspartate + ATP = L-aspartyl-tRNA(Asx) + AMP + diphosphate. In terms of biological role, aspartyl-tRNA synthetase with relaxed tRNA specificity since it is able to aspartylate not only its cognate tRNA(Asp) but also tRNA(Asn). Reaction proceeds in two steps: L-aspartate is first activated by ATP to form Asp-AMP and then transferred to the acceptor end of tRNA(Asp/Asn). The chain is Aspartate--tRNA(Asp/Asn) ligase from Treponema denticola (strain ATCC 35405 / DSM 14222 / CIP 103919 / JCM 8153 / KCTC 15104).